A 97-amino-acid chain; its full sequence is Citrate lyase acyl carrier protein (97 aa).

S14 is modified (O-(phosphoribosyl dephospho-coenzyme A)serine).

It belongs to the CitD family. Oligomer with a subunit composition of (alpha,beta,gamma)6.

Its subcellular location is the cytoplasm. Its function is as follows. Covalent carrier of the coenzyme of citrate lyase. This chain is Citrate lyase acyl carrier protein, found in Klebsiella pneumoniae subsp. pneumoniae (strain ATCC 700721 / MGH 78578).